A 381-amino-acid polypeptide reads, in one-letter code: Putative acyl-CoA dehydrogenase YdbM (381 aa).

FAD contacts are provided by residues 158–160 and 337–341; these read FTT and RIVGA.

The protein belongs to the acyl-CoA dehydrogenase family. The cofactor is FAD.

In Bacillus subtilis (strain 168), this protein is Putative acyl-CoA dehydrogenase YdbM (ydbM).